The following is a 440-amino-acid chain: Chromosome partition protein MukF (440 aa).

Residues 208–236 (LSETSGTLRELQDTLEAAGDKLQANLLRI) are leucine-zipper.

This sequence belongs to the MukF family. Interacts, and probably forms a ternary complex, with MukE and MukB via its C-terminal region. The complex formation is stimulated by calcium or magnesium. It is required for an interaction between MukE and MukB.

Its subcellular location is the cytoplasm. The protein resides in the nucleoid. Functionally, involved in chromosome condensation, segregation and cell cycle progression. May participate in facilitating chromosome segregation by condensation DNA from both sides of a centrally located replisome during cell division. Not required for mini-F plasmid partitioning. Probably acts via its interaction with MukB and MukE. Overexpression results in anucleate cells. It has a calcium binding activity. This is Chromosome partition protein MukF from Escherichia coli O17:K52:H18 (strain UMN026 / ExPEC).